An 871-amino-acid chain; its full sequence is Translation initiation factor IF-2 (871 aa).

A disordered region spans residues 1 to 242 (MVDTKNPGDK…PAAKPAPAKQ (242 aa)). The segment covering 68–91 (PASARTPAAKAPPARAATPAAPRA) has biased composition (low complexity). Positions 115–174 (AKVRAEEERRIAEAEAARRNSKEGIEQAEREAAEARRKAEEERHRQEEEAKRKAEIEAKR) are enriched in basic and acidic residues. 2 stretches are compositionally biased toward low complexity: residues 182-206 (KPAPAKTTTTTTRAAPPARPAAVAA) and 225-241 (ARPVIAPKPAAKPAPAK). In terms of domain architecture, tr-type G spans 367 to 538 (PRSPVVTVMG…SLQADLLDLK (172 aa)). The tract at residues 376–383 (GHVDHGKT) is G1. GTP is bound at residue 376–383 (GHVDHGKT). The G2 stretch occupies residues 401–405 (GITQH). The G3 stretch occupies residues 424–427 (DTPG). GTP contacts are provided by residues 424–428 (DTPGH) and 478–481 (NKID). The segment at 478-481 (NKID) is G4. The G5 stretch occupies residues 514–516 (SAK).

It belongs to the TRAFAC class translation factor GTPase superfamily. Classic translation factor GTPase family. IF-2 subfamily.

It is found in the cytoplasm. Functionally, one of the essential components for the initiation of protein synthesis. Protects formylmethionyl-tRNA from spontaneous hydrolysis and promotes its binding to the 30S ribosomal subunits. Also involved in the hydrolysis of GTP during the formation of the 70S ribosomal complex. The chain is Translation initiation factor IF-2 from Nitrobacter winogradskyi (strain ATCC 25391 / DSM 10237 / CIP 104748 / NCIMB 11846 / Nb-255).